Here is a 343-residue protein sequence, read N- to C-terminus: Succinylglutamate desuccinylase (343 aa).

The Zn(2+) site is built by H60, E63, and H157. E221 is an active-site residue.

Belongs to the AspA/AstE family. Succinylglutamate desuccinylase subfamily. Requires Zn(2+) as cofactor.

It catalyses the reaction N-succinyl-L-glutamate + H2O = L-glutamate + succinate. Its pathway is amino-acid degradation; L-arginine degradation via AST pathway; L-glutamate and succinate from L-arginine: step 5/5. Transforms N(2)-succinylglutamate into succinate and glutamate. This is Succinylglutamate desuccinylase from Idiomarina loihiensis (strain ATCC BAA-735 / DSM 15497 / L2-TR).